A 446-amino-acid chain; its full sequence is Adenylosuccinate synthetase 1 (446 aa).

Residues 20–26 and 48–50 contribute to the GTP site; these read GDEGKGK and GHT. Asp-21 serves as the catalytic Proton acceptor. 2 residues coordinate Mg(2+): Asp-21 and Gly-48. IMP contacts are provided by residues 21-24, 46-49, Thr-137, Arg-151, Gln-232, Thr-247, and Arg-319; these read DEGK and NAGH. His-49 acts as the Proton donor in catalysis. 315–321 contacts substrate; the sequence is SVTGRPR. Residues Arg-321, 347-349, and 429-431 each bind GTP; these read KLD and STG.

The protein belongs to the adenylosuccinate synthetase family. As to quaternary structure, homodimer. Mg(2+) is required as a cofactor.

The protein localises to the cytoplasm. The catalysed reaction is IMP + L-aspartate + GTP = N(6)-(1,2-dicarboxyethyl)-AMP + GDP + phosphate + 2 H(+). It participates in purine metabolism; AMP biosynthesis via de novo pathway; AMP from IMP: step 1/2. In terms of biological role, plays an important role in the de novo pathway of purine nucleotide biosynthesis. Catalyzes the first committed step in the biosynthesis of AMP from IMP. This is Adenylosuccinate synthetase 1 from Cupriavidus pinatubonensis (strain JMP 134 / LMG 1197) (Cupriavidus necator (strain JMP 134)).